The sequence spans 313 residues: Porphobilinogen deaminase (313 aa).

At cysteine 242 the chain carries S-(dipyrrolylmethanemethyl)cysteine.

It belongs to the HMBS family. In terms of assembly, monomer. Requires dipyrromethane as cofactor.

The catalysed reaction is 4 porphobilinogen + H2O = hydroxymethylbilane + 4 NH4(+). The protein operates within porphyrin-containing compound metabolism; protoporphyrin-IX biosynthesis; coproporphyrinogen-III from 5-aminolevulinate: step 2/4. Tetrapolymerization of the monopyrrole PBG into the hydroxymethylbilane pre-uroporphyrinogen in several discrete steps. The polypeptide is Porphobilinogen deaminase (Salmonella arizonae (strain ATCC BAA-731 / CDC346-86 / RSK2980)).